A 228-amino-acid chain; its full sequence is Probable U3 small nucleolar RNA-associated protein 11 (228 aa).

Disordered regions lie at residues 1–23 (MSSL…EARK) and 192–211 (SMQK…DDEL). Basic and acidic residues predominate over residues 12-23 (AHKERSQPEARK).

This sequence belongs to the UTP11 family. Component of the ribosomal small subunit (SSU) processome.

Its subcellular location is the nucleus. It localises to the nucleolus. In terms of biological role, involved in nucleolar processing of pre-18S ribosomal RNA. This is Probable U3 small nucleolar RNA-associated protein 11 from Arabidopsis thaliana (Mouse-ear cress).